We begin with the raw amino-acid sequence, 431 residues long: Histidinol dehydrogenase (431 aa).

NAD(+) is bound by residues Tyr130, Gln191, and Asn214. Ser237, Gln259, and His262 together coordinate substrate. Zn(2+)-binding residues include Gln259 and His262. Active-site proton acceptor residues include Glu327 and His328. His328, Asp361, Glu415, and His420 together coordinate substrate. Asp361 serves as a coordination point for Zn(2+). His420 serves as a coordination point for Zn(2+).

It belongs to the histidinol dehydrogenase family. It depends on Zn(2+) as a cofactor.

It catalyses the reaction L-histidinol + 2 NAD(+) + H2O = L-histidine + 2 NADH + 3 H(+). Its pathway is amino-acid biosynthesis; L-histidine biosynthesis; L-histidine from 5-phospho-alpha-D-ribose 1-diphosphate: step 9/9. Functionally, catalyzes the sequential NAD-dependent oxidations of L-histidinol to L-histidinaldehyde and then to L-histidine. The protein is Histidinol dehydrogenase of Rhodopseudomonas palustris (strain ATCC BAA-98 / CGA009).